The sequence spans 82 residues: Small ribosomal subunit protein bS18 (82 aa).

A disordered region spans residues 1–20; that stretch reads MVDINQIPTRRPFHRRRKTC.

Belongs to the bacterial ribosomal protein bS18 family. Part of the 30S ribosomal subunit. Forms a tight heterodimer with protein bS6.

Its function is as follows. Binds as a heterodimer with protein bS6 to the central domain of the 16S rRNA, where it helps stabilize the platform of the 30S subunit. This is Small ribosomal subunit protein bS18 from Chelativorans sp. (strain BNC1).